The primary structure comprises 447 residues: UDP-N-acetylmuramate--L-alanine ligase (447 aa).

107–113 (GTHGKTT) contributes to the ATP binding site.

The protein belongs to the MurCDEF family.

Its subcellular location is the cytoplasm. The enzyme catalyses UDP-N-acetyl-alpha-D-muramate + L-alanine + ATP = UDP-N-acetyl-alpha-D-muramoyl-L-alanine + ADP + phosphate + H(+). It functions in the pathway cell wall biogenesis; peptidoglycan biosynthesis. Its function is as follows. Cell wall formation. This is UDP-N-acetylmuramate--L-alanine ligase from Rubrobacter xylanophilus (strain DSM 9941 / JCM 11954 / NBRC 16129 / PRD-1).